Here is a 620-residue protein sequence, read N- to C-terminus: Glutathione-regulated potassium-efflux system protein KefC (620 aa).

Residues M1 to S3 are Periplasmic-facing. The chain crosses the membrane as a helical span at residues H4–V24. Residue R25 is a topological domain, cytoplasmic. Residues L26–L46 form a helical membrane-spanning segment. Topologically, residues R47–E53 are periplasmic. A helical transmembrane segment spans residues S54 to L74. Over D75 to G89 the chain is Cytoplasmic. A helical transmembrane segment spans residues G90–L110. The Periplasmic portion of the chain corresponds to R111–Q113. Residues V114–M134 form a helical membrane-spanning segment. Topologically, residues N135–A148 are cytoplasmic. The helical transmembrane segment at F149–L169 threads the bilayer. Over A170–T177 the chain is Periplasmic. The chain crosses the membrane as a helical span at residues L178–L198. The Cytoplasmic segment spans residues G199–S213. The chain crosses the membrane as a helical span at residues G214–L233. The Periplasmic portion of the chain corresponds to L234 to E236. Residues V237 to S254 form a helical membrane-spanning segment. The Cytoplasmic segment spans residues S255 to K269. The helical transmembrane segment at G270–V290 threads the bilayer. Over E291–P293 the chain is Periplasmic. Residues L294–V314 form a helical membrane-spanning segment. Residues A315–R326 lie on the Cytoplasmic side of the membrane. The chain crosses the membrane as a helical span at residues W327–Q347. Residues M348–K358 are Periplasmic-facing. The chain crosses the membrane as a helical span at residues A359–T379. The Cytoplasmic segment spans residues R380–I620. Positions Q399–T518 constitute an RCK N-terminal domain. A disordered region spans residues Q599–I620.

This sequence belongs to the monovalent cation:proton antiporter 2 (CPA2) transporter (TC 2.A.37) family. KefC subfamily. As to quaternary structure, homodimer. Interacts with the regulatory subunit KefF.

The protein localises to the cell inner membrane. In terms of biological role, pore-forming subunit of a potassium efflux system that confers protection against electrophiles. Catalyzes K(+)/H(+) antiport. The protein is Glutathione-regulated potassium-efflux system protein KefC of Salmonella typhimurium (strain LT2 / SGSC1412 / ATCC 700720).